We begin with the raw amino-acid sequence, 197 residues long: 7-methyl-GTP pyrophosphatase (197 aa).

Catalysis depends on Asp-69, which acts as the Proton acceptor.

This sequence belongs to the Maf family. YceF subfamily. The cofactor is a divalent metal cation.

The protein resides in the cytoplasm. The catalysed reaction is N(7)-methyl-GTP + H2O = N(7)-methyl-GMP + diphosphate + H(+). Nucleoside triphosphate pyrophosphatase that hydrolyzes 7-methyl-GTP (m(7)GTP). May have a dual role in cell division arrest and in preventing the incorporation of modified nucleotides into cellular nucleic acids. This Pectobacterium atrosepticum (strain SCRI 1043 / ATCC BAA-672) (Erwinia carotovora subsp. atroseptica) protein is 7-methyl-GTP pyrophosphatase.